The following is a 275-amino-acid chain: MSLVLAVYGKGGIGKSTTSANISAALALKGAKVLQIGCDPKHDSTFPITGKLQKTVIEALEEVDFHHEELGAEDIIETGFAGIDCLEAGGPPAGSGCGGYVVGESVTLLQELGLYDKYDVILFDVLGDVVCGGFSAPLNYADYAIIIATNDFDSIFAANRLCMAIQQKSVRYKVKLAGIVANRVDYTTGGGTNMLDQFAEKVGTRLLAKVPYHELIRKSRFAGKTLFAMEDTPGKDDCLIPYNEIADFLIQENPLASVPVPIGDREIFDMVGGWQ.

ATP-binding positions include 12–17 (GIGKST) and K41. S16 contacts Mg(2+). The [4Fe-4S] cluster site is built by C97 and C131. 182–183 (NR) contacts ATP.

This sequence belongs to the NifH/BchL/ChlL family. As to quaternary structure, homodimer. Protochlorophyllide reductase is composed of three subunits; BchL, BchN and BchB. Requires [4Fe-4S] cluster as cofactor.

The catalysed reaction is chlorophyllide a + oxidized 2[4Fe-4S]-[ferredoxin] + 2 ADP + 2 phosphate = protochlorophyllide a + reduced 2[4Fe-4S]-[ferredoxin] + 2 ATP + 2 H2O. It functions in the pathway porphyrin-containing compound metabolism; bacteriochlorophyll biosynthesis (light-independent). In terms of biological role, component of the dark-operative protochlorophyllide reductase (DPOR) that uses Mg-ATP and reduced ferredoxin to reduce ring D of protochlorophyllide (Pchlide) to form chlorophyllide a (Chlide). This reaction is light-independent. The L component serves as a unique electron donor to the NB-component of the complex, and binds Mg-ATP. This is Light-independent protochlorophyllide reductase iron-sulfur ATP-binding protein from Chlorobium phaeobacteroides (strain DSM 266 / SMG 266 / 2430).